A 123-amino-acid polypeptide reads, in one-letter code: Histone H2B.3 (123 aa).

The interval 1–30 (MPPKVSGKAAKKAGKAQKNISKGDKKKNRK) is disordered. Serine 110 is a glycosylation site (O-linked (GlcNAc) serine). Lysine 118 participates in a covalent cross-link: Glycyl lysine isopeptide (Lys-Gly) (interchain with G-Cter in ubiquitin).

This sequence belongs to the histone H2B family. The nucleosome is a histone octamer containing two molecules each of H2A, H2B, H3 and H4 assembled in one H3-H4 heterotetramer and two H2A-H2B heterodimers. The octamer wraps approximately 147 bp of DNA. Post-translationally, monoubiquitination of Lys-118 gives a specific tag for epigenetic transcriptional activation and is also prerequisite for histone H3 'Lys-4' and 'Lys-79' methylation. GlcNAcylation at Ser-110 promotes monoubiquitination of Lys-118. It fluctuates in response to extracellular glucose, and associates with transcribed genes.

It is found in the nucleus. The protein resides in the chromosome. Core component of nucleosome. Nucleosomes wrap and compact DNA into chromatin, limiting DNA accessibility to the cellular machineries which require DNA as a template. Histones thereby play a central role in transcription regulation, DNA repair, DNA replication and chromosomal stability. DNA accessibility is regulated via a complex set of post-translational modifications of histones, also called histone code, and nucleosome remodeling. This Tigriopus californicus (Marine copepod) protein is Histone H2B.3.